A 273-amino-acid chain; its full sequence is Zinc finger protein 80 (273 aa).

C2H2-type zinc fingers lie at residues 49 to 71 (YKCKECGKVFNKNSLLVRHHQIH) and 77 to 99 (YECQECGKAFHEKVDFVRHMRIH). The C2H2-type 3; atypical zinc-finger motif lies at 105–127 (CKCVECGKVFNRRSHLLCYRQIH). 4 consecutive C2H2-type zinc fingers follow at residues 133-155 (YECSECGKTFSYHSVFIQHRMTH), 161-183 (FGCKECGKTFYYNSSLTRHMKIH), 189-211 (YKCGECGKTFTYHSVFFRHSMTH), and 217-239 (YECKECGKGFYYSYSLTRHTRSH).

It belongs to the krueppel C2H2-type zinc-finger protein family.

The protein resides in the nucleus. May be involved in transcriptional regulation. The polypeptide is Zinc finger protein 80 (ZNF80) (Gorilla gorilla gorilla (Western lowland gorilla)).